Reading from the N-terminus, the 64-residue chain is Prokaryotic ubiquitin-like protein Pup (64 aa).

Residues 1–37 (MAQEQTKRGGGGGDDDDIAGSTAAGQERREKLTEETD) are disordered. The segment at 21 to 58 (STAAGQERREKLTEETDDLLDEIDDVLEENAEDFVRAY) is ARC ATPase binding. The stretch at 23-52 (AAGQERREKLTEETDDLLDEIDDVLEENAE) forms a coiled coil. Gln64 is modified (deamidated glutamine). Gln64 is covalently cross-linked (Isoglutamyl lysine isopeptide (Gln-Lys) (interchain with K-? in acceptor proteins)).

It belongs to the prokaryotic ubiquitin-like protein family. In terms of assembly, strongly interacts with the proteasome-associated ATPase ARC through a hydrophobic interface; the interacting region of Pup lies in its C-terminal half. There is one Pup binding site per ARC hexamer ring. Post-translationally, is modified by deamidation of its C-terminal glutamine to glutamate by the deamidase Dop, a prerequisite to the subsequent pupylation process.

The protein operates within protein degradation; proteasomal Pup-dependent pathway. Protein modifier that is covalently attached to lysine residues of substrate proteins, thereby targeting them for proteasomal degradation. The tagging system is termed pupylation. This chain is Prokaryotic ubiquitin-like protein Pup, found in Mycobacterium tuberculosis (strain ATCC 25177 / H37Ra).